The sequence spans 392 residues: MEFVYDVAESAVSPAVIKVIGLGGGGCNAINNMVANNVRSVEFISANTDAQSLAKNHAAKRIQLGTNLTRGLGAGANPDIGRAAAQEDREAIEEAIRGANMLFITTGMGGGTGTGSAPVVAEIAKSLGILTVAVVTRPFSYEGKRVHVAQAGLEQLKEHVDSLIIIPNDKLMTALGEDVTMREAFRAADNVLRDAVAGISEVVTCPSEIINLDFADVKTVMSNRGIAMMGSGYAQGIDRARMATDQAISSPLLDDVTLDGARGVLVNITTAPGCLKMSELSEVMKIVNQSAHPDLECKFGAAEDETMSEDAIRITIIATGLKEKGAVDPTPEREVEAVAPSKQEQSHIVEGMIRTNRGIRTMNLTAADFDNQSVLDDFEIPAILRRQHNSDK.

GTP-binding positions include 24 to 28 (GGGCN), 111 to 113 (GTG), Glu142, Arg145, and Asp189.

This sequence belongs to the FtsZ family. Homodimer. Polymerizes to form a dynamic ring structure in a strictly GTP-dependent manner. Interacts directly with several other division proteins.

It is found in the cytoplasm. In terms of biological role, essential cell division protein that forms a contractile ring structure (Z ring) at the future cell division site. The regulation of the ring assembly controls the timing and the location of cell division. One of the functions of the FtsZ ring is to recruit other cell division proteins to the septum to produce a new cell wall between the dividing cells. Binds GTP and shows GTPase activity. The protein is Cell division protein FtsZ of Neisseria gonorrhoeae.